The primary structure comprises 293 residues: Elongation factor Ts (293 aa).

Residues 80–83 form an involved in Mg(2+) ion dislocation from EF-Tu region; that stretch reads TDFV.

This sequence belongs to the EF-Ts family.

It localises to the cytoplasm. Functionally, associates with the EF-Tu.GDP complex and induces the exchange of GDP to GTP. It remains bound to the aminoacyl-tRNA.EF-Tu.GTP complex up to the GTP hydrolysis stage on the ribosome. This is Elongation factor Ts from Burkholderia vietnamiensis (strain G4 / LMG 22486) (Burkholderia cepacia (strain R1808)).